The primary structure comprises 701 residues: Elongation factor G (701 aa).

A tr-type G domain is found at 11–287; the sequence is TKVRNIGIMA…AVIDYLPSPL (277 aa). GTP is bound by residues 20 to 27, 84 to 88, and 138 to 141; these read AHIDAGKT, DTPGH, and NKMD.

Belongs to the TRAFAC class translation factor GTPase superfamily. Classic translation factor GTPase family. EF-G/EF-2 subfamily.

It is found in the cytoplasm. Functionally, catalyzes the GTP-dependent ribosomal translocation step during translation elongation. During this step, the ribosome changes from the pre-translocational (PRE) to the post-translocational (POST) state as the newly formed A-site-bound peptidyl-tRNA and P-site-bound deacylated tRNA move to the P and E sites, respectively. Catalyzes the coordinated movement of the two tRNA molecules, the mRNA and conformational changes in the ribosome. The protein is Elongation factor G of Mycobacterium avium (strain 104).